Consider the following 479-residue polypeptide: U3 snoRNP-associated protein-like EMB2271 (479 aa).

Residues 1–73 are disordered; the sequence is MKLEKKKGIG…AHETVGEKRK (73 aa). Over residues 8–17 the composition is skewed to basic residues; the sequence is GIGAKRRGKK. A compositionally biased stretch (basic and acidic residues) spans 18–38; it reads SSIDHDPFLEEETEKRRKFNY. Acidic residues predominate over residues 39 to 51; sequence DDDDDIESVESEE. A compositionally biased stretch (basic and acidic residues) spans 52–73; the sequence is EGKVGEEVEDEFAHETVGEKRK. WD repeat units follow at residues 143–182, 204–243, 246–285, 288–326, 328–366, 386–425, and 431–471; these read KHQH…SDEY, RHNK…HVQA, GHCG…YIES, GHQS…RLIY, ASES…PVFI, PACS…SAIQ, and PLPG…QNGV.

The protein belongs to the WD repeat RRP9 family.

The protein resides in the nucleus. It is found in the nucleolus. Its function is as follows. Component of a nucleolar small nuclear ribonucleoprotein particle (snoRNP) thought to participate in the processing and modification of pre-ribosomal RNA. Essential for embryogenesis. May function during late embryogenesis. In Arabidopsis thaliana (Mouse-ear cress), this protein is U3 snoRNP-associated protein-like EMB2271.